The chain runs to 300 residues: MLTSKHEFSLFLNTPAINSKSEKEVISEGPLTTSNEIDVTFSESFSSHLINLRRVPSVNSIIEQEKKGLTKISPSILNQNIAYKEKRQQLFSVLYEETVGYVSMDTLCIAISLLDRCFTVKPTIPTTSFKIYAIGCLFIAFKLTSDYSVAKKSFCENLAPSLSTKNLEKYEKIVLALLNFDIYVISLPSVESFLTPLIFQHVFFKSLPSESCDQMMVEWQYLLVEVMKDCQFIEYRPTEILCASFWVLLEIIWPSAFDFKPFQHLCSLPTNGSADETYIKHSNRFHDLIISIQRIADMLA.

Residues 61 to 183 (IIEQEKKGLT…VLALLNFDIY (123 aa)) form the Cyclin N-terminal domain.

The protein belongs to the cyclin family. Cyclin AB subfamily.

The protein localises to the cytoplasm. Its subcellular location is the nucleus. In terms of biological role, has a role in meiotic chromosome segregation. The chain is Meiosis-specific cyclin crs1 (crs1) from Schizosaccharomyces pombe (strain 972 / ATCC 24843) (Fission yeast).